A 219-amino-acid chain; its full sequence is Steroid receptor RNA activator 1 (219 aa).

2 disordered regions span residues 1 to 90 (MAEL…SSPV) and 192 to 219 (SLSS…QPSS). Over residues 23 to 32 (YGLQTQTGGT) the composition is skewed to polar residues. A Phosphoserine modification is found at Ser-48. Positions 55 to 76 (SGPPPVDHPPPSSKASRPPPMG) are enriched in pro residues. Positions 192–203 (SLSSEENKEEKS) are enriched in basic and acidic residues. A compositionally biased stretch (polar residues) spans 206-219 (APENQTIPGFQPSS).

Belongs to the SRA1 family. As to quaternary structure, SRA1 RNA exists in a ribonucleoprotein complex containing NCOA1. The RNA also forms a complex with PUS1 and RARG in the nucleus. Interacts with AR. In terms of tissue distribution, expressed in various prostate cancer cell lines.

The protein resides in the nucleus. The protein localises to the cytoplasm. Functionally, functional RNA which acts as a transcriptional coactivator that selectively enhances steroid receptor-mediated transactivation ligand-independently through a mechanism involving the modulating N-terminal domain (AF-1) of steroid receptors. Also mediates transcriptional coactivation of steroid receptors ligand-dependently through the steroid-binding domain (AF-2). Enhances cellular proliferation and differentiation and promotes apoptosis in vivo. May play a role in tumorigenesis. This Rattus norvegicus (Rat) protein is Steroid receptor RNA activator 1.